Consider the following 417-residue polypeptide: Gamma-glutamyl phosphate reductase (417 aa).

The protein belongs to the gamma-glutamyl phosphate reductase family.

The protein localises to the cytoplasm. It carries out the reaction L-glutamate 5-semialdehyde + phosphate + NADP(+) = L-glutamyl 5-phosphate + NADPH + H(+). Its pathway is amino-acid biosynthesis; L-proline biosynthesis; L-glutamate 5-semialdehyde from L-glutamate: step 2/2. Its function is as follows. Catalyzes the NADPH-dependent reduction of L-glutamate 5-phosphate into L-glutamate 5-semialdehyde and phosphate. The product spontaneously undergoes cyclization to form 1-pyrroline-5-carboxylate. The protein is Gamma-glutamyl phosphate reductase of Chlorobium phaeobacteroides (strain BS1).